Consider the following 280-residue polypeptide: Urease accessory protein UreD 1 (280 aa).

Belongs to the UreD family. In terms of assembly, ureD, UreF and UreG form a complex that acts as a GTP-hydrolysis-dependent molecular chaperone, activating the urease apoprotein by helping to assemble the nickel containing metallocenter of UreC. The UreE protein probably delivers the nickel.

The protein resides in the cytoplasm. Required for maturation of urease via the functional incorporation of the urease nickel metallocenter. The polypeptide is Urease accessory protein UreD 1 (Brucella melitensis biotype 1 (strain ATCC 23456 / CCUG 17765 / NCTC 10094 / 16M)).